The following is a 174-amino-acid chain: Bifunctional protein PyrR (174 aa).

Substrate contacts are provided by residues 38–39 (SG), 95–103 (DDVLATGRT), and Arg128. The short motif at 91-103 (ILLVDDVLATGRT) is the PRPP-binding element.

This sequence belongs to the purine/pyrimidine phosphoribosyltransferase family. PyrR subfamily.

The enzyme catalyses UMP + diphosphate = 5-phospho-alpha-D-ribose 1-diphosphate + uracil. Regulates the transcription of the pyrimidine nucleotide (pyr) operon in response to exogenous pyrimidines. Its function is as follows. Also displays a weak uracil phosphoribosyltransferase activity which is not physiologically significant. This is Bifunctional protein PyrR from Ralstonia nicotianae (strain ATCC BAA-1114 / GMI1000) (Ralstonia solanacearum).